Consider the following 141-residue polypeptide: Large ribosomal subunit protein uL11 (141 aa).

Belongs to the universal ribosomal protein uL11 family. As to quaternary structure, part of the ribosomal stalk of the 50S ribosomal subunit. Interacts with L10 and the large rRNA to form the base of the stalk. L10 forms an elongated spine to which L12 dimers bind in a sequential fashion forming a multimeric L10(L12)X complex. One or more lysine residues are methylated.

Functionally, forms part of the ribosomal stalk which helps the ribosome interact with GTP-bound translation factors. This is Large ribosomal subunit protein uL11 from Ruegeria pomeroyi (strain ATCC 700808 / DSM 15171 / DSS-3) (Silicibacter pomeroyi).